A 71-amino-acid polypeptide reads, in one-letter code: Small ribosomal subunit protein bS21 (71 aa).

Belongs to the bacterial ribosomal protein bS21 family.

The chain is Small ribosomal subunit protein bS21 from Baumannia cicadellinicola subsp. Homalodisca coagulata.